The primary structure comprises 790 residues: AMP deaminase (790 aa).

Polar residues predominate over residues 1–14 (MSTPLRGSSPQVSF). Residues 1–26 (MSTPLRGSSPQVSFYESELDQEGGSD) form a disordered region. Histidine 221 and histidine 223 together coordinate Zn(2+). Residues histidine 223 and 292–297 (KFNLKY) each bind substrate. Histidine 488 serves as a coordination point for Zn(2+). Glutamate 491 provides a ligand contact to substrate. Histidine 510 acts as the Proton acceptor in catalysis. Residue aspartate 565 coordinates Zn(2+). A substrate-binding site is contributed by 566–569 (DPLQ). Disordered stretches follow at residues 698–726 (NKLR…SSPG) and 739–790 (PPPL…KSDK). Composition is skewed to low complexity over residues 706 to 726 (GSTP…SSPG) and 750 to 781 (NNNN…TTTN).

It belongs to the metallo-dependent hydrolases superfamily. Adenosine and AMP deaminases family. As to quaternary structure, homodimer. Zn(2+) is required as a cofactor.

It is found in the cytoplasm. The catalysed reaction is AMP + H2O + H(+) = IMP + NH4(+). The protein operates within purine metabolism; IMP biosynthesis via salvage pathway; IMP from AMP: step 1/1. Its activity is regulated as follows. Activated by ATP, inhibited by GTP, EDTA and inorganic phosphate. Its function is as follows. Catalyzes the conversion of adenosine monophosphate (AMP) to inosine monophosphate (IMP) and ammonia (NH4(+)). Participates in the regulation of the adenylated nucleotide pool and the interconversion to guanylated nucleotides during early morphodifferentiation. The sequence is that of AMP deaminase (amdA) from Dictyostelium discoideum (Social amoeba).